Here is a 272-residue protein sequence, read N- to C-terminus: MLTKRIIPCLDIKEGRVVKGTNFVELRDAGDPVELSKIYNEQGADELVFLDITASFEKRDIIIDVVKRTAEQVFIPLTVGGGIKTVDDFRKILRAGADKISINTSAVKTPDLIKEASEIFGTQCVVVAMDVKRKYITDSQDENLKNKNIFETKLGSCWFEVYIYGGREGTGIDAIEWAKKVEYLGAGEILLTSMDADGTKDGYDLVLTKAISENTKLPIIASGGCGNANHVVDAFTEGKADAALMASILHYRECTVNDLKKEVEKNNIPVRF.

Active-site residues include Asp11 and Asp130.

Belongs to the HisA/HisF family. Heterodimer of HisH and HisF.

The protein resides in the cytoplasm. It carries out the reaction 5-[(5-phospho-1-deoxy-D-ribulos-1-ylimino)methylamino]-1-(5-phospho-beta-D-ribosyl)imidazole-4-carboxamide + L-glutamine = D-erythro-1-(imidazol-4-yl)glycerol 3-phosphate + 5-amino-1-(5-phospho-beta-D-ribosyl)imidazole-4-carboxamide + L-glutamate + H(+). Its pathway is amino-acid biosynthesis; L-histidine biosynthesis; L-histidine from 5-phospho-alpha-D-ribose 1-diphosphate: step 5/9. In terms of biological role, IGPS catalyzes the conversion of PRFAR and glutamine to IGP, AICAR and glutamate. The HisF subunit catalyzes the cyclization activity that produces IGP and AICAR from PRFAR using the ammonia provided by the HisH subunit. The polypeptide is Imidazole glycerol phosphate synthase subunit HisF (Methanococcus maripaludis (strain DSM 14266 / JCM 13030 / NBRC 101832 / S2 / LL)).